A 60-amino-acid polypeptide reads, in one-letter code: INVPLTRHKSMRESLREKGIELPYQDPAIKYRPEFATANYMYINQYADTIYYGAISIGTP.

A propeptide spans 1 to 35 (INVPLTRHKSMRESLREKGIELPYQDPAIKYRPEF) (activation peptide).

The protein belongs to the peptidase A1 family.

This Thunnus orientalis (North Pacific bluefin tuna) protein is Pepsin-3.